We begin with the raw amino-acid sequence, 1119 residues long: DNA-directed RNA polymerase subunit beta (1119 aa).

Belongs to the RNA polymerase beta chain family. As to quaternary structure, the RNAP catalytic core consists of 2 alpha, 1 beta, 1 beta' and 1 omega subunit. When a sigma factor is associated with the core the holoenzyme is formed, which can initiate transcription.

It catalyses the reaction RNA(n) + a ribonucleoside 5'-triphosphate = RNA(n+1) + diphosphate. Functionally, DNA-dependent RNA polymerase catalyzes the transcription of DNA into RNA using the four ribonucleoside triphosphates as substrates. This Thermus thermophilus (strain ATCC 27634 / DSM 579 / HB8) protein is DNA-directed RNA polymerase subunit beta.